The primary structure comprises 144 residues: Large ribosomal subunit protein uL15 (144 aa).

The disordered stretch occupies residues 1 to 54 (MRLNTLSPAEGSKKAGKRLGRGIGSGLGKTGGRGHKGQKSRSGGGVRRGFEGGQ). Residues 21-31 (RGIGSGLGKTG) show a composition bias toward gly residues.

Belongs to the universal ribosomal protein uL15 family. In terms of assembly, part of the 50S ribosomal subunit.

Functionally, binds to the 23S rRNA. The protein is Large ribosomal subunit protein uL15 of Salmonella enteritidis PT4 (strain P125109).